A 62-amino-acid polypeptide reads, in one-letter code: Protein DsrB (62 aa).

This sequence belongs to the DsrB family.

In Citrobacter koseri (strain ATCC BAA-895 / CDC 4225-83 / SGSC4696), this protein is Protein DsrB.